We begin with the raw amino-acid sequence, 103 residues long: Acyl-CoA-binding protein (103 aa).

In terms of domain architecture, ACB spans 18–103; that stretch reads HQADFDEAAE…AKTMVEKYGI (86 aa). An acyl-CoA is bound by residues Lys30, 45–49, Lys67, Lys71, and Tyr90; that span reads YGFYK.

It belongs to the ACBP family. In terms of assembly, monomer.

It localises to the endoplasmic reticulum. The protein resides in the golgi apparatus. Functionally, binds medium- and long-chain acyl-CoA esters with very high affinity and may function as an intracellular carrier of acyl-CoA esters. It is also able to displace diazepam from the benzodiazepine (BZD) recognition site located on the GABA type A receptor. It is therefore possible that this protein also acts as a neuropeptide to modulate the action of the GABA receptor. The chain is Acyl-CoA-binding protein (DBI) from Anas platyrhynchos (Mallard).